Consider the following 369-residue polypeptide: Cytokine receptor common subunit gamma (369 aa).

The N-terminal stretch at 1 to 22 (MLKLLLSPRSFLVLQLLLLRAG) is a signal peptide. The Extracellular segment spans residues 23 to 263 (WSSKVLMSSA…ENPSLFALEA (241 aa)). Cysteines 62 and 72 form a disulfide. N71, N75, N84, and N96 each carry an N-linked (GlcNAc...) asparagine glycan. A disulfide bond links C102 and C115. The 99-residue stretch at 156-254 (APENLTLSNL…VHWGSHTVEE (99 aa)) folds into the Fibronectin type-III domain. N-linked (GlcNAc...) asparagine glycosylation is found at N159 and N164. The short motif at 238-242 (WSKWS) is the WSXWS motif element. Residues 264 to 284 (VLIPVGTMGLIITLIFVYCWL) form a helical membrane-spanning segment. The Cytoplasmic segment spans residues 285–369 (ERMPPIPPIK…PPCYSLKPEA (85 aa)). The Box 1 motif motif lies at 286-294 (RMPPIPPIK).

Belongs to the type I cytokine receptor family. Type 5 subfamily. As to quaternary structure, the gamma subunit is common to the IL2, IL4, IL7, IL15, IL21 and probably also the IL13 receptors. Interacts with SHB upon interleukin stimulation. Interacts with IL9.

The protein localises to the cell membrane. The protein resides in the cell surface. Functionally, common subunit for the receptors for a variety of interleukins. Probably in association with IL15RA, involved in the stimulation of neutrophil phagocytosis by IL15. The sequence is that of Cytokine receptor common subunit gamma (Il2rg) from Mus musculus (Mouse).